The sequence spans 694 residues: Elongation factor G (694 aa).

Residues 8 to 283 enclose the tr-type G domain; that stretch reads ERYRNIGIMA…AVIDYLPAPV (276 aa). Residues 17–24, 81–85, and 135–138 contribute to the GTP site; these read AHIDAGKT, DTPGH, and NKMD.

It belongs to the TRAFAC class translation factor GTPase superfamily. Classic translation factor GTPase family. EF-G/EF-2 subfamily.

The protein resides in the cytoplasm. Its function is as follows. Catalyzes the GTP-dependent ribosomal translocation step during translation elongation. During this step, the ribosome changes from the pre-translocational (PRE) to the post-translocational (POST) state as the newly formed A-site-bound peptidyl-tRNA and P-site-bound deacylated tRNA move to the P and E sites, respectively. Catalyzes the coordinated movement of the two tRNA molecules, the mRNA and conformational changes in the ribosome. The protein is Elongation factor G of Paramagnetospirillum magneticum (strain ATCC 700264 / AMB-1) (Magnetospirillum magneticum).